Reading from the N-terminus, the 936-residue chain is MFKKLLGDPNARKLKKFQPWVTDINILEEDIQKLSDEELKAKTGEFRQALEKAKTKDEEKAILEEILPEAFAVVREAGKRVLSMRHFDVQLLGGIILHQGQIAEMKTGEGKTLVATLPAYLNGLTGKGVHVITVNDYLARRDAEWMGQVHRFLGLSVGLIQQGMNPEERKKNYTCDITYATNSEVGFDYLRDNMATNMEEVVQRPFNFCIIDEVDSVLVDEARTPLIISGQVERPSEKYIKAAEIAAALSKEKEHYEVDEKARNVLLSDEGFAEAEQLLAVQDLYNPEDPWAHFVFNALKAKELFIKDVNYIVRDDEVVIVDEFTGRVMPGRRWSDGLHQAIEAKERVDIQPETQTLATITYQNFFLLYPKLSGMTGTAKTEEAEFEKIYNLQVTIIPTNKPTGRKDLSDVVYKTEVGKWKSIAQECAEMHKEGRPVLVGTTSVEKSELLSRLLGEGKIPHQLLNAKPENVERESEIVAQAGRGGAVTIATNMAGRGTDIILGGNAEYMAKLKLREYLMPKVVKPEDDDGLGMVRVSGLKKSHVAKGFDPQQKVKTWKVSPQIFPVKLSQETEGMLKLAVNLAVKEWGERALPELVVEDKVAIAAEKAPTTEPVIEKLREVYNLIRQEYENYIEREHNQVVGCGGLHVIGTERHESRRIDNQLRGRAGRQGDPGSTRFFLSLEDNLLRIFGGDRVAGMMQAFGVEEDMPIESGLLTRSLEGAQKKVETYYYDMRKQVFEYDEVMNNQRRAIYAERRRVLEGRDLKEQVIKYAEQTMDDIVEAYINPELPSEEWELDKLVEKVKQFVYLLADLTPEQLFDLSMEDIRTFMHEQVRNAYDIKEAQVNQIRGGLMRDAERFFILQQIDTLWREHLQQMDALRESVGLRGYGQKDPLIEYKSEGYELFLDMMTDIRRNVVYSLFQFQPQPAVQTTAAETV.

ATP is bound by residues Gln90, 108–112, and Asp499; that span reads GEGKT.

Belongs to the SecA family. As to quaternary structure, monomer and homodimer. Part of the essential Sec protein translocation apparatus which comprises SecA, SecYEG and auxiliary proteins SecDF. Other proteins may also be involved.

It localises to the cell inner membrane. The protein resides in the cellular thylakoid membrane. Its subcellular location is the cytoplasm. It catalyses the reaction ATP + H2O + cellular proteinSide 1 = ADP + phosphate + cellular proteinSide 2.. Its function is as follows. Part of the Sec protein translocase complex. Interacts with the SecYEG preprotein conducting channel. Has a central role in coupling the hydrolysis of ATP to the transfer of proteins into and across the cell membrane, serving as an ATP-driven molecular motor driving the stepwise translocation of polypeptide chains across the membrane. Probably participates in protein translocation into and across both the cytoplasmic and thylakoid membranes in cyanobacterial cells. In Trichodesmium erythraeum (strain IMS101), this protein is Protein translocase subunit SecA.